The chain runs to 535 residues: UDP-glycosyltransferase stmC (535 aa).

Asn-70 and Asn-422 each carry an N-linked (GlcNAc...) asparagine glycan. The helical transmembrane segment at 506–526 threads the bilayer; sequence ASNLDLYIVCIAFVAVPVGVA.

This sequence belongs to the glycosyltransferase 28 family.

Its subcellular location is the membrane. The enzyme catalyses stromemycin aglycone + UDP-alpha-D-glucose = stromemycin + UDP + H(+). It catalyses the reaction exophillate aglycone + UDP-alpha-D-glucose = exophillate + UDP + H(+). The protein operates within mycotoxin biosynthesis. UDP-glycosyltransferase; part of the gene cluster that mediates the biosynthesis of stromemycin, a depside C-glucoside with two unsaturated C9 side chains belonging to aromatic polyketide glycosides. Acts as the tailoring enzyme responsible for 3-C-glucosylation of bininalkenylresorcylic acid produced by the combined action of the HR-PKS stmA and the NR-PKS stmB to yield stromemycin. Possesses a relatively strict acceptor specificity towards bininalkenylresorcylic acid for C-glycosylation, but is able to use several donors including UDP-alpha-D-galactose, UDP-alpha-D-xylose, UDP-alpha-D-4-keto-6-deoxyglucose, UDP-alpha-D-quinovose, and UDP-beta-L-rhamnose. This is UDP-glycosyltransferase stmC from Aspergillus ustus.